The primary structure comprises 158 residues: MQGRLSAWLVKHGLVHRSLGFDYQGIETLQIKPEDWHSIAVILYVYGYNYLRSQCAYDVAPGGLLASVYHLTRIEYGVDQPEEVCIKVFAPRRNPRIPSVFWIWKSADFQERESYDMLGICYDTHPRLKRILMPETWIGWPLRKDYIAPNFYEIQDAH.

It belongs to the complex I 30 kDa subunit family. In terms of assembly, NDH is composed of at least 16 different subunits, 5 of which are encoded in the nucleus.

Its subcellular location is the plastid. It is found in the chloroplast thylakoid membrane. It catalyses the reaction a plastoquinone + NADH + (n+1) H(+)(in) = a plastoquinol + NAD(+) + n H(+)(out). The enzyme catalyses a plastoquinone + NADPH + (n+1) H(+)(in) = a plastoquinol + NADP(+) + n H(+)(out). Functionally, NDH shuttles electrons from NAD(P)H:plastoquinone, via FMN and iron-sulfur (Fe-S) centers, to quinones in the photosynthetic chain and possibly in a chloroplast respiratory chain. The immediate electron acceptor for the enzyme in this species is believed to be plastoquinone. Couples the redox reaction to proton translocation, and thus conserves the redox energy in a proton gradient. This is NAD(P)H-quinone oxidoreductase subunit J, chloroplastic from Eucalyptus globulus subsp. globulus (Tasmanian blue gum).